A 342-amino-acid chain; its full sequence is Aristolochene synthase (342 aa).

Residues Asp-115, Asn-244, Ser-248, and Glu-252 each contribute to the Mg(2+) site. Arg-340 and Tyr-341 together coordinate (2E,6E)-farnesyl diphosphate.

This sequence belongs to the terpene synthase family. As to quaternary structure, homodimer. Mg(2+) is required as a cofactor.

It catalyses the reaction (2E,6E)-farnesyl diphosphate = (+)-aristolochene + diphosphate. It participates in sesquiterpene biosynthesis; aristolochene biosynthesis; aristolochene from farnesyl diphosphate: step 1/1. Aristolochene synthase; part of the gene cluster that mediates the biosynthesis of PR-toxin, a bicyclic sesquiterpene belonging to the eremophilane class and acting as a mycotoxin. The first step of the pathway is catalyzed by the aristolochene synthase which performs the cyclization of trans,trans-farnesyl diphosphate (FPP) to the bicyclic sesquiterpene aristolochene. Following the formation of aristolochene, the non-oxygenated aristolochene is converted to the trioxygenated intermediate eremofortin B, via 7-epi-neopetasone. This conversion appears to involve three enzymes, a hydroxysterol oxidase-like enzyme, the quinone-oxidase prx3 that forms the quinone-type-structure in the bicyclic nucleus of aristolochene with the C8-oxo group and the C-3 hydroxyl group, and the P450 monooxygenase ORF6 that introduces the epoxide at the double bond between carbons 1 and 2. No monoxy or dioxy-intermediates have been reported to be released to the broth, so these three early oxidative reactions may be coupled together. Eremofortin B is further oxidized by another P450 monooxygenase, that introduces a second epoxide between carbons 7 and 11 prior to acetylation to eremofortin A by the acetyltransferase ORF8. The second epoxidation may be performed by a second P450 monooxygenase. After the acetylation step, eremofortin A is converted to eremofortin C and then to PR-toxin. First the conversion of eremofortin A to eremofortin C proceeds by oxidation of the side chain of the molecule at C-12 and is catalyzed by the short-chain oxidoreductase prx1. The cytochrome P450 monooxygenase ORF5 also plays a role in this step. The primary alcohol formed at C-12 is finally oxidized by the short-chain alcohol dehydrogenase prx4 that forms PR-toxin. The polypeptide is Aristolochene synthase (Penicillium roqueforti (strain FM164)).